Consider the following 388-residue polypeptide: Succinate--CoA ligase [ADP-forming] subunit beta (388 aa).

The ATP-grasp domain maps to K9–K245. Residues K46, G53 to G55, E100, Y103, and E108 each bind ATP. N200 and D214 together coordinate Mg(2+). Residues N265 and G322–V324 contribute to the substrate site.

It belongs to the succinate/malate CoA ligase beta subunit family. Heterotetramer of two alpha and two beta subunits. It depends on Mg(2+) as a cofactor.

It carries out the reaction succinate + ATP + CoA = succinyl-CoA + ADP + phosphate. The enzyme catalyses GTP + succinate + CoA = succinyl-CoA + GDP + phosphate. Its pathway is carbohydrate metabolism; tricarboxylic acid cycle; succinate from succinyl-CoA (ligase route): step 1/1. Its function is as follows. Succinyl-CoA synthetase functions in the citric acid cycle (TCA), coupling the hydrolysis of succinyl-CoA to the synthesis of either ATP or GTP and thus represents the only step of substrate-level phosphorylation in the TCA. The beta subunit provides nucleotide specificity of the enzyme and binds the substrate succinate, while the binding sites for coenzyme A and phosphate are found in the alpha subunit. In Acinetobacter baumannii (strain SDF), this protein is Succinate--CoA ligase [ADP-forming] subunit beta.